Consider the following 22-residue polypeptide: MQYISLNTTIITTTETTGYGAG.

It belongs to the thr operon leader peptide family.

Its function is as follows. This protein is involved in control of the biosynthesis of threonine. The protein is thr operon leader peptide of Yersinia enterocolitica serotype O:8 / biotype 1B (strain NCTC 13174 / 8081).